The sequence spans 1515 residues: Lysophospholipase nte1 (1515 aa).

The Cytoplasmic portion of the chain corresponds to 1-59; it reads MESLSNLGNAMSSVLSETTSTTATAILADPTEALSSVVALASDAVSKATSDVVPEHTPT. A helical membrane pass occupies residues 60 to 80; that stretch reads SWFTIILWLLHRISSVLYFVI. Over 81–102 the chain is Lumenal; sequence KLTTITTPTFLFNIFSTSLTVT. A helical transmembrane segment spans residues 103–123; the sequence is MNATTLVLIMLFMMAGVTWVV. Topologically, residues 124 to 1515 are cytoplasmic; that stretch reads RYRYLNMYSR…RTMAPRRASI (1392 aa). 3 disordered regions span residues 278-303, 519-580, and 617-639; these read MHDT…GYPM, VTAT…TPRN, and VNPD…SRGG. Composition is skewed to polar residues over residues 543 to 554 and 566 to 579; these read LTNTQQLKSGPA and PRPQ…STPR. A nucleoside 3',5'-cyclic phosphate-binding positions include 670 to 789 and 835 to 955; these read SPVP…LAGY and RLTE…IAAR. A PNPLA domain is found at 1212–1376; it reads LVLGGGGARG…IDNLTVSRMK (165 aa). The short motif at 1216–1221 is the GXGXXG element; that stretch reads GGGARG. The short motif at 1243–1247 is the GXSXG element; sequence GTSIG. Catalysis depends on Ser-1245, which acts as the Nucleophile. The active-site Proton acceptor is Asp-1363. Positions 1363 to 1365 match the DGA/G motif; sequence DGG.

It belongs to the NTE family.

The protein resides in the endoplasmic reticulum membrane. It catalyses the reaction a 1-acyl-sn-glycero-3-phosphocholine + H2O = sn-glycerol 3-phosphocholine + a fatty acid + H(+). Inhibited by organophosphorus esters. In terms of biological role, intracellular phospholipase B that catalyzes the double deacylation of phosphatidylcholine (PC) to glycerophosphocholine (GroPCho). Plays an important role in membrane lipid homeostasis. Responsible for the rapid PC turnover in response to inositol, elevated temperatures, or when choline is present in the growth medium. The sequence is that of Lysophospholipase nte1 (nte1) from Neurospora crassa (strain ATCC 24698 / 74-OR23-1A / CBS 708.71 / DSM 1257 / FGSC 987).